The primary structure comprises 262 residues: Small ribosomal subunit protein eS1 (262 aa).

The protein belongs to the eukaryotic ribosomal protein eS1 family. Component of the small ribosomal subunit. Mature ribosomes consist of a small (40S) and a large (60S) subunit. The 40S subunit contains about 33 different proteins and 1 molecule of RNA (18S). The 60S subunit contains about 49 different proteins and 3 molecules of RNA (25S, 5.8S and 5S).

The protein localises to the cytoplasm. The protein is Small ribosomal subunit protein eS1 of Theileria annulata.